Consider the following 418-residue polypeptide: Transmembrane protease serine 11A (418 aa).

Over 1–18 (MMYRTVGFGTRSRNLKPW) the chain is Cytoplasmic. Residues 19 to 39 (MIAVLIVLSLTVVAVTIGLLV) traverse the membrane as a helical; Signal-anchor for type II membrane protein segment. The Extracellular portion of the chain corresponds to 40–418 (HFLVFDQKKE…RNWIASKTGI (379 aa)). The SEA domain maps to 47 to 164 (KKEYYHGSFK…SSVQVNAMSS (118 aa)). A glycan (N-linked (GlcNAc...) asparagine) is linked at Asn153. The Peptidase S1 domain occupies 187–417 (IASGVIAPKA…YRNWIASKTG (231 aa)). Cys212 and Cys228 are oxidised to a cystine. Active-site charge relay system residues include His227 and Asp272. N-linked (GlcNAc...) asparagine glycosylation occurs at Asn303. Intrachain disulfides connect Cys337–Cys353 and Cys364–Cys393. The active-site Charge relay system is the Ser368.

The protein belongs to the peptidase S1 family. In terms of assembly, may interact with ZBTB17. Expressed in esophagus, liver, colon and lung. Down-regulated in esophagus cancers.

It localises to the membrane. In terms of biological role, probable serine protease which may play a role in cellular senescence. Overexpression inhibits cell growth and induce G1 cell cycle arrest. The protein is Transmembrane protease serine 11A (TMPRSS11A) of Homo sapiens (Human).